The following is a 283-amino-acid chain: Bifunctional protein FolD (283 aa).

NADP(+) contacts are provided by residues 165–167 (GRS) and Ser190.

The protein belongs to the tetrahydrofolate dehydrogenase/cyclohydrolase family. As to quaternary structure, homodimer.

The enzyme catalyses (6R)-5,10-methylene-5,6,7,8-tetrahydrofolate + NADP(+) = (6R)-5,10-methenyltetrahydrofolate + NADPH. It carries out the reaction (6R)-5,10-methenyltetrahydrofolate + H2O = (6R)-10-formyltetrahydrofolate + H(+). The protein operates within one-carbon metabolism; tetrahydrofolate interconversion. Functionally, catalyzes the oxidation of 5,10-methylenetetrahydrofolate to 5,10-methenyltetrahydrofolate and then the hydrolysis of 5,10-methenyltetrahydrofolate to 10-formyltetrahydrofolate. This chain is Bifunctional protein FolD, found in Paracidovorax citrulli (strain AAC00-1) (Acidovorax citrulli).